Here is a 602-residue protein sequence, read N- to C-terminus: (R)-limonene synthase (602 aa).

Mg(2+) contacts are provided by aspartate 356, aspartate 360, aspartate 500, threonine 504, and glutamate 508. The DDXXD motif signature appears at 356 to 360 (DDVYD).

This sequence belongs to the terpene synthase family. Requires Mg(2+) as cofactor. Mn(2+) is required as a cofactor.

It carries out the reaction (2E)-geranyl diphosphate = (4R)-limonene + diphosphate. Functionally, catalyzes the formation of (R)-(+)-limonene, terpinolene, (1R,5S)-(+)-camphene, (1R,5R)-(+)-alpha-pinene, beta-myrcene and traces of alpha-phellandrene. This Lavandula angustifolia (Lavender) protein is (R)-limonene synthase.